Reading from the N-terminus, the 130-residue chain is Ribosome-binding factor A (130 aa).

This sequence belongs to the RbfA family. In terms of assembly, monomer. Binds 30S ribosomal subunits, but not 50S ribosomal subunits or 70S ribosomes.

Its subcellular location is the cytoplasm. One of several proteins that assist in the late maturation steps of the functional core of the 30S ribosomal subunit. Associates with free 30S ribosomal subunits (but not with 30S subunits that are part of 70S ribosomes or polysomes). Required for efficient processing of 16S rRNA. May interact with the 5'-terminal helix region of 16S rRNA. This is Ribosome-binding factor A from Prochlorococcus marinus (strain AS9601).